The chain runs to 724 residues: Phosphoribosylformylglycinamidine synthase subunit PurL (724 aa).

H46 is a catalytic residue. 2 residues coordinate ATP: Y49 and K88. Residue E90 coordinates Mg(2+). Substrate contacts are provided by residues 91–94 (SHNH) and R113. H92 serves as the catalytic Proton acceptor. D114 is a binding site for Mg(2+). Substrate is bound at residue Q237. D265 is a binding site for Mg(2+). Residue 309 to 311 (ESQ) participates in substrate binding. ATP-binding residues include D489 and G526. N527 is a binding site for Mg(2+). Residue S529 participates in substrate binding.

Belongs to the FGAMS family. As to quaternary structure, monomer. Part of the FGAM synthase complex composed of 1 PurL, 1 PurQ and 2 PurS subunits.

The protein resides in the cytoplasm. It carries out the reaction N(2)-formyl-N(1)-(5-phospho-beta-D-ribosyl)glycinamide + L-glutamine + ATP + H2O = 2-formamido-N(1)-(5-O-phospho-beta-D-ribosyl)acetamidine + L-glutamate + ADP + phosphate + H(+). Its pathway is purine metabolism; IMP biosynthesis via de novo pathway; 5-amino-1-(5-phospho-D-ribosyl)imidazole from N(2)-formyl-N(1)-(5-phospho-D-ribosyl)glycinamide: step 1/2. Functionally, part of the phosphoribosylformylglycinamidine synthase complex involved in the purines biosynthetic pathway. Catalyzes the ATP-dependent conversion of formylglycinamide ribonucleotide (FGAR) and glutamine to yield formylglycinamidine ribonucleotide (FGAM) and glutamate. The FGAM synthase complex is composed of three subunits. PurQ produces an ammonia molecule by converting glutamine to glutamate. PurL transfers the ammonia molecule to FGAR to form FGAM in an ATP-dependent manner. PurS interacts with PurQ and PurL and is thought to assist in the transfer of the ammonia molecule from PurQ to PurL. This Granulibacter bethesdensis (strain ATCC BAA-1260 / CGDNIH1) protein is Phosphoribosylformylglycinamidine synthase subunit PurL.